The following is a 408-amino-acid chain: Imidazolonepropionase (408 aa).

Positions 73 and 75 each coordinate Fe(3+). Zn(2+) contacts are provided by histidine 73 and histidine 75. Residues arginine 82, tyrosine 145, and histidine 178 each coordinate 4-imidazolone-5-propanoate. Tyrosine 145 contacts N-formimidoyl-L-glutamate. Position 243 (histidine 243) interacts with Fe(3+). Histidine 243 is a binding site for Zn(2+). Glutamine 246 serves as a coordination point for 4-imidazolone-5-propanoate. Aspartate 318 contacts Fe(3+). Aspartate 318 contributes to the Zn(2+) binding site. N-formimidoyl-L-glutamate-binding residues include asparagine 320 and glycine 322. Residue serine 323 participates in 4-imidazolone-5-propanoate binding.

This sequence belongs to the metallo-dependent hydrolases superfamily. HutI family. Zn(2+) serves as cofactor. It depends on Fe(3+) as a cofactor.

The protein localises to the cytoplasm. It catalyses the reaction 4-imidazolone-5-propanoate + H2O = N-formimidoyl-L-glutamate. Its pathway is amino-acid degradation; L-histidine degradation into L-glutamate; N-formimidoyl-L-glutamate from L-histidine: step 3/3. Its function is as follows. Catalyzes the hydrolytic cleavage of the carbon-nitrogen bond in imidazolone-5-propanoate to yield N-formimidoyl-L-glutamate. It is the third step in the universal histidine degradation pathway. In Shewanella sp. (strain W3-18-1), this protein is Imidazolonepropionase.